A 365-amino-acid polypeptide reads, in one-letter code: AP2/ERF and B3 domain-containing protein Os01g0141000 (365 aa).

The disordered stretch occupies residues Met1 to Val24. Residues Arg68–Pro123 constitute a DNA-binding region (AP2/ERF). Positions Phe182–Asn294 form a DNA-binding region, TF-B3.

Its subcellular location is the nucleus. The polypeptide is AP2/ERF and B3 domain-containing protein Os01g0141000 (Oryza sativa subsp. japonica (Rice)).